A 340-amino-acid chain; its full sequence is Glyceraldehyde-3-phosphate dehydrogenase (340 aa).

Residues 11-12 (TI) and G109 contribute to the NAD(+) site. An intrachain disulfide couples C123 to C149. Residue 138-140 (SCN) participates in D-glyceraldehyde 3-phosphate binding. C139 (nucleophile) is an active-site residue. NAD(+) is bound at residue R167. A D-glyceraldehyde 3-phosphate-binding site is contributed by 193–194 (HA). Residue Q300 participates in NAD(+) binding.

It belongs to the glyceraldehyde-3-phosphate dehydrogenase family. As to quaternary structure, homotetramer.

Its subcellular location is the cytoplasm. The enzyme catalyses D-glyceraldehyde 3-phosphate + phosphate + NADP(+) = (2R)-3-phospho-glyceroyl phosphate + NADPH + H(+). It catalyses the reaction D-glyceraldehyde 3-phosphate + phosphate + NAD(+) = (2R)-3-phospho-glyceroyl phosphate + NADH + H(+). It functions in the pathway carbohydrate degradation; glycolysis; pyruvate from D-glyceraldehyde 3-phosphate: step 1/5. Its function is as follows. Can use both NAD and NADP as cofactors, but exhibits a marked preference for NADP. This Saccharolobus solfataricus (strain ATCC 35092 / DSM 1617 / JCM 11322 / P2) (Sulfolobus solfataricus) protein is Glyceraldehyde-3-phosphate dehydrogenase (gap).